The following is an 884-amino-acid chain: Lon protease homolog 2, peroxisomal (884 aa).

The 244-residue stretch at Leu12 to Leu255 folds into the Lon N-terminal domain. The disordered stretch occupies residues Ser67–Lys101. Residues Ser75–Ala89 are compositionally biased toward gly residues. Gly408–Thr415 contacts ATP. The Lon proteolytic domain occupies Val689–Gly874. Active-site residues include Ser780 and Lys823. Residues Ser882–Leu884 carry the Microbody targeting signal motif.

It belongs to the peptidase S16 family.

The protein resides in the peroxisome matrix. The catalysed reaction is Hydrolysis of proteins in presence of ATP.. ATP-dependent serine protease that mediates the selective degradation of misfolded and unassembled polypeptides in the peroxisomal matrix. Necessary for type 2 peroxisome targeting signal (PTS2)-containing protein processing and facilitates peroxisome matrix protein import. The polypeptide is Lon protease homolog 2, peroxisomal (Oryza sativa subsp. japonica (Rice)).